Here is a 202-residue protein sequence, read N- to C-terminus: dITP/XTP pyrophosphatase (202 aa).

Substrate is bound at residue 8–13 (TKNMGK). Mg(2+)-binding residues include glutamate 41 and aspartate 70. Aspartate 70 (proton acceptor) is an active-site residue. Substrate contacts are provided by residues serine 71, 155–158 (FGYD), lysine 178, and 183–184 (HR).

It belongs to the HAM1 NTPase family. As to quaternary structure, homodimer. Mg(2+) is required as a cofactor.

It carries out the reaction XTP + H2O = XMP + diphosphate + H(+). The enzyme catalyses dITP + H2O = dIMP + diphosphate + H(+). It catalyses the reaction ITP + H2O = IMP + diphosphate + H(+). In terms of biological role, pyrophosphatase that catalyzes the hydrolysis of nucleoside triphosphates to their monophosphate derivatives, with a high preference for the non-canonical purine nucleotides XTP (xanthosine triphosphate), dITP (deoxyinosine triphosphate) and ITP. Seems to function as a house-cleaning enzyme that removes non-canonical purine nucleotides from the nucleotide pool, thus preventing their incorporation into DNA/RNA and avoiding chromosomal lesions. The protein is dITP/XTP pyrophosphatase of Bacillus anthracis.